The chain runs to 308 residues: Aspartate carbamoyltransferase catalytic subunit (308 aa).

Carbamoyl phosphate is bound by residues arginine 57 and threonine 58. Residue lysine 86 participates in L-aspartate binding. Carbamoyl phosphate is bound by residues arginine 107, histidine 135, and glutamine 138. L-aspartate contacts are provided by arginine 167 and arginine 228. Positions 267 and 268 each coordinate carbamoyl phosphate.

This sequence belongs to the aspartate/ornithine carbamoyltransferase superfamily. ATCase family. Heterooligomer of catalytic and regulatory chains.

It catalyses the reaction carbamoyl phosphate + L-aspartate = N-carbamoyl-L-aspartate + phosphate + H(+). It participates in pyrimidine metabolism; UMP biosynthesis via de novo pathway; (S)-dihydroorotate from bicarbonate: step 2/3. Its function is as follows. Catalyzes the condensation of carbamoyl phosphate and aspartate to form carbamoyl aspartate and inorganic phosphate, the committed step in the de novo pyrimidine nucleotide biosynthesis pathway. The chain is Aspartate carbamoyltransferase catalytic subunit from Methanosarcina acetivorans (strain ATCC 35395 / DSM 2834 / JCM 12185 / C2A).